We begin with the raw amino-acid sequence, 313 residues long: Homoserine O-succinyltransferase (313 aa).

Cysteine 142 acts as the Acyl-thioester intermediate in catalysis. Residues lysine 163 and serine 192 each contribute to the substrate site. The active-site Proton acceptor is histidine 235. Glutamate 237 is an active-site residue. A substrate-binding site is contributed by arginine 249.

It belongs to the MetA family.

It is found in the cytoplasm. It carries out the reaction L-homoserine + succinyl-CoA = O-succinyl-L-homoserine + CoA. It functions in the pathway amino-acid biosynthesis; L-methionine biosynthesis via de novo pathway; O-succinyl-L-homoserine from L-homoserine: step 1/1. In terms of biological role, transfers a succinyl group from succinyl-CoA to L-homoserine, forming succinyl-L-homoserine. The sequence is that of Homoserine O-succinyltransferase from Shewanella sp. (strain MR-4).